We begin with the raw amino-acid sequence, 82 residues long: Putative membrane protein insertion efficiency factor (82 aa).

Belongs to the UPF0161 family.

It is found in the cell inner membrane. Its function is as follows. Could be involved in insertion of integral membrane proteins into the membrane. The polypeptide is Putative membrane protein insertion efficiency factor (Rickettsia rickettsii (strain Iowa)).